A 225-amino-acid polypeptide reads, in one-letter code: NAD(P)H-quinone oxidoreductase subunit K, chloroplastic (225 aa).

Residues C43, C44, C108, and C139 each coordinate [4Fe-4S] cluster.

This sequence belongs to the complex I 20 kDa subunit family. In terms of assembly, NDH is composed of at least 16 different subunits, 5 of which are encoded in the nucleus. The cofactor is [4Fe-4S] cluster.

It is found in the plastid. The protein resides in the chloroplast thylakoid membrane. It carries out the reaction a plastoquinone + NADH + (n+1) H(+)(in) = a plastoquinol + NAD(+) + n H(+)(out). The enzyme catalyses a plastoquinone + NADPH + (n+1) H(+)(in) = a plastoquinol + NADP(+) + n H(+)(out). NDH shuttles electrons from NAD(P)H:plastoquinone, via FMN and iron-sulfur (Fe-S) centers, to quinones in the photosynthetic chain and possibly in a chloroplast respiratory chain. The immediate electron acceptor for the enzyme in this species is believed to be plastoquinone. Couples the redox reaction to proton translocation, and thus conserves the redox energy in a proton gradient. This is NAD(P)H-quinone oxidoreductase subunit K, chloroplastic from Arabis hirsuta (Hairy rock-cress).